The sequence spans 349 residues: tRNA pseudouridine synthase D (349 aa).

Residue Phe26 coordinates substrate. The Nucleophile role is filled by Asp79. Asn128 contacts substrate. The TRUD domain occupies 154–302 (GVPNYFGSQR…VEGSRRAVLL (149 aa)). Phe328 is a substrate binding site.

It belongs to the pseudouridine synthase TruD family.

It catalyses the reaction uridine(13) in tRNA = pseudouridine(13) in tRNA. Functionally, responsible for synthesis of pseudouridine from uracil-13 in transfer RNAs. The polypeptide is tRNA pseudouridine synthase D (Yersinia pseudotuberculosis serotype O:1b (strain IP 31758)).